We begin with the raw amino-acid sequence, 115 residues long: Ribonuclease P protein component (115 aa).

Belongs to the RnpA family. As to quaternary structure, consists of a catalytic RNA component (M1 or rnpB) and a protein subunit.

It catalyses the reaction Endonucleolytic cleavage of RNA, removing 5'-extranucleotides from tRNA precursor.. Its function is as follows. RNaseP catalyzes the removal of the 5'-leader sequence from pre-tRNA to produce the mature 5'-terminus. It can also cleave other RNA substrates such as 4.5S RNA. The protein component plays an auxiliary but essential role in vivo by binding to the 5'-leader sequence and broadening the substrate specificity of the ribozyme. This is Ribonuclease P protein component from Buchnera aphidicola subsp. Acyrthosiphon pisum (strain APS) (Acyrthosiphon pisum symbiotic bacterium).